The sequence spans 469 residues: MNPNQKIITIGSVSLTIATVCFLMQIAILVTTVTLHFKQYECDSPASNQVMPCEPIIIERNITEIVYLNNTTIDKEKCPKVVEYRNWSKPQCQITGFAPFSKDNSIRLSAGGDIWVTREPYVSCDHGKCYQFALGQGTTLDNKHSNDTIHDRIPHRTLLMNELGVPFHLGTRQVCIAWSSSSCHDGKAWLHVCITGDDKNATASFIYDGRLVDSIGSWSQNILRTQESECVCINGTCTVVMTDGSASGRADTRILFIEEGKIVHISPLSGSAQHVEECSCYPRYPGVRCICRDNWKGSNRPVVDINMEDYSIDSSYVCSGLVGDTPRNDDRSSNSNCRNPNNERGNQGVKGWAFDNGDDVWMGRTISKDLRSGYETFKVIGGWSTPNSKSQINRQVIVDSDNRSGYSGIFSVEGKSCINRCFYVELIRGRKQETRVWWTSNSIVVFCGTSGTYGTGSWPDGANINFMPI.

Over 1 to 9 (MNPNQKIIT) the chain is Intravirion. A helical transmembrane segment spans residues 10-30 (IGSVSLTIATVCFLMQIAILV). The segment at 11–33 (GSVSLTIATVCFLMQIAILVTTV) is involved in apical transport and lipid raft association. The Virion surface portion of the chain corresponds to 31-469 (TTVTLHFKQY…DGANINFMPI (439 aa)). Positions 36 to 88 (HFKQYECDSPASNQVMPCEPIIIERNITEIVYLNNTTIDKEKCPKVVEYRNWS) are hypervariable stalk region. Residues asparagine 61, asparagine 69, asparagine 70, and asparagine 86 are each glycosylated (N-linked (GlcNAc...) asparagine; by host). The segment at 91 to 469 (QCQITGFAPF…DGANINFMPI (379 aa)) is head of neuraminidase. Disulfide bonds link cysteine 92–cysteine 417, cysteine 124–cysteine 129, cysteine 183–cysteine 230, cysteine 232–cysteine 237, cysteine 278–cysteine 291, cysteine 280–cysteine 289, cysteine 318–cysteine 337, and cysteine 421–cysteine 447. Residue arginine 118 participates in substrate binding. A glycan (N-linked (GlcNAc...) asparagine; by host) is linked at asparagine 146. Catalysis depends on aspartate 151, which acts as the Proton donor/acceptor. Arginine 152 contributes to the substrate binding site. Asparagine 200 and asparagine 234 each carry an N-linked (GlcNAc...) asparagine; by host glycan. 276–277 (EE) contributes to the substrate binding site. Arginine 292 serves as a coordination point for substrate. 3 residues coordinate Ca(2+): aspartate 293, glycine 297, and aspartate 324. The segment at 324-350 (DTPRNDDRSSNSNCRNPNNERGNQGVK) is disordered. The segment covering 333–342 (SNSNCRNPNN) has biased composition (low complexity). Position 371 (arginine 371) interacts with substrate. An N-linked (GlcNAc...) asparagine; by host glycan is attached at asparagine 402. Tyrosine 406 serves as the catalytic Nucleophile.

It belongs to the glycosyl hydrolase 34 family. As to quaternary structure, homotetramer. It depends on Ca(2+) as a cofactor. Post-translationally, N-glycosylated.

It is found in the virion membrane. It localises to the host apical cell membrane. The enzyme catalyses Hydrolysis of alpha-(2-&gt;3)-, alpha-(2-&gt;6)-, alpha-(2-&gt;8)- glycosidic linkages of terminal sialic acid residues in oligosaccharides, glycoproteins, glycolipids, colominic acid and synthetic substrates.. Inhibited by the neuraminidase inhibitors zanamivir (Relenza) and oseltamivir (Tamiflu). These drugs interfere with the release of progeny virus from infected cells and are effective against all influenza strains. Resistance to neuraminidase inhibitors is quite rare. Its function is as follows. Catalyzes the removal of terminal sialic acid residues from viral and cellular glycoconjugates. Cleaves off the terminal sialic acids on the glycosylated HA during virus budding to facilitate virus release. Additionally helps virus spread through the circulation by further removing sialic acids from the cell surface. These cleavages prevent self-aggregation and ensure the efficient spread of the progeny virus from cell to cell. Otherwise, infection would be limited to one round of replication. Described as a receptor-destroying enzyme because it cleaves a terminal sialic acid from the cellular receptors. May facilitate viral invasion of the upper airways by cleaving the sialic acid moieties on the mucin of the airway epithelial cells. Likely to plays a role in the budding process through its association with lipid rafts during intracellular transport. May additionally display a raft-association independent effect on budding. Plays a role in the determination of host range restriction on replication and virulence. Sialidase activity in late endosome/lysosome traffic seems to enhance virus replication. This chain is Neuraminidase, found in Aves (whales).